The sequence spans 154 residues: Aspartate carbamoyltransferase regulatory chain (154 aa).

4 residues coordinate Zn(2+): C109, C114, C138, and C141.

It belongs to the PyrI family. Contains catalytic and regulatory chains. It depends on Zn(2+) as a cofactor.

In terms of biological role, involved in allosteric regulation of aspartate carbamoyltransferase. This chain is Aspartate carbamoyltransferase regulatory chain, found in Yersinia enterocolitica serotype O:8 / biotype 1B (strain NCTC 13174 / 8081).